The following is a 368-amino-acid chain: Transmembrane protein 26 (368 aa).

3 helical membrane passes run 4–24 (LVFLNALATRLLFLLHSLVGV), 36–56 (YWLLALLNLLLFLETALTLKF), and 65–85 (FSPAIFLYLISIVPSLWLLEL). Asparagine 110 is a glycosylation site (N-linked (GlcNAc...) asparagine). Helical transmembrane passes span 150–170 (QTFLLMLIIGRWLLPIGGGIT), 177–197 (LLLMFVGTAADILEFTSETLE), 208–228 (VYAILVIWTWSMLQFPLDLAV), 257–277 (IGISVFIQDGPFLVVRLILMT), and 281–301 (VINQMLVFFAAKNFLVVVLQL). Positions 324 to 368 (GEHGCRAQTSESGPSQRDWQNESKEGLAIPLRGSPVTSDDSHHTP) are disordered. The segment covering 330-341 (AQTSESGPSQRD) has biased composition (polar residues).

The protein localises to the membrane. In Homo sapiens (Human), this protein is Transmembrane protein 26 (TMEM26).